The sequence spans 1080 residues: MLRSLTCSSTITSTSLFFRSFRQLPRSYLSPSSSTTVVGASGRNIRRLSTLEAAGRRLFLRRGLKLLSAASRGLNGQFSRLSIRAVATQSAPSSYPGQDEAEKLGFEKVSEEFISECKSKAVLFKHKKTGCEVMSVSNDDENKVFGIVFRTPPKDSTGIPHILEHSVLCGSRKYPMKEPFVELLKGSLHTFLNAFTYPDRTCYPVASTNKKDFYNLVDVYLDAVFFPKCVDDVHTFQQEGWHYELNDPSEDISYKGVVFNEMKGVYSQPDNILGRVTQQALCPENTYGVDSGGDPKDIPKLTFEKFKEFHRQYYHPSNARIWFYGDDDPVHRLRVLSEYLDMFDASPARDSSKVEPQKLFSRPRRIVEKYPAGEDGDLKKKHMVCLNWLLSDKPLDLQTQLALGFLDHLMLGTPASPLRKILLESGLGEALVNSGMEDELLQPQFSIGLKGVSDDNVQKVEELVMNTLRKLADEGFDTDAVEASMNTIEFSLRENNTGSSPRGLSLMLQSIAKWIYDMDPFEPLKYEEPLKSLKARIAEKGSKSVFSPLIEEYILNNPHCVTIEMQPDPEKASLEEAEEKSILEKVKASMTEEDLTELARATEELRLKQETPDPPDALKCVPSLNLSDIPKEPIYVPTEVGDINGVKVLRNDLFTNNILYTEVVFDMGSVKHELLQLIPLFCQSLLEMGTQDLTFVQLNQLIGRKTGGISVYPLTSSVYGRDDPCSKIIVRGKSMVGRAEDLFNLMNCVLQEVRFTDQQRFKQFVSQSRARMENRLRGSGQGIAAARMDAMLNVAGWMSEQMGGLSYLEFLHTLEQKVDQDWEGISSSLEEIRRSFLSRNGCIVNMTADGKSLTNTEKYVGKFLDLLPENPSGELVTWDARLPLRNEAIVIPTQVNYVGKAGNIYSSGYKLDGSSYVISKHISNTWLWDRVRVSGGAYGGSCDFDSHSGVFSFLSYRDPNLLKTLDIYDGTGDFLRGLDVDEDTLTKAIIGTIGDVDSYQLPDAKGYTSLLRHLLNVTDEERQIRREEILSTSLKDFKEFAEAIDSVSDKGVAVAVASQEDIDAANRERSNFFEVKKAAL.

A chloroplast and mitochondrion-targeting transit peptide spans 1–84 (MLRSLTCSST…NGQFSRLSIR (84 aa)). A Zn(2+)-binding site is contributed by histidine 161. Glutamate 164 functions as the Proton acceptor in the catalytic mechanism. Histidine 165 lines the Zn(2+) pocket. Residue glutamate 239 is part of the active site. Glutamate 261 provides a ligand contact to Zn(2+). Residue arginine 704 coordinates Mg(2+).

This sequence belongs to the peptidase M16 family. PreP subfamily. Homodimer. Requires Zn(2+) as cofactor. It depends on Mg(2+) as a cofactor. As to expression, expressed in leaves, flowers and roots, but not detected in siliques and shoots.

It is found in the plastid. Its subcellular location is the chloroplast stroma. The protein resides in the mitochondrion matrix. Its activity is regulated as follows. Completely inhibited by the metal chelator orthophenanthroline. Its function is as follows. ATP-independent protease that degrades both mitochondrial and chloroplastic transit peptides after their cleavage. Also degrades other unstructured peptides. Specific for peptides in the range of 10 to 65 residues. Shows a preference for cleavage after small polar residues and before basic residues, but without any positional preference. The protein is Presequence protease 2, chloroplastic/mitochondrial (PREP2) of Arabidopsis thaliana (Mouse-ear cress).